We begin with the raw amino-acid sequence, 369 residues long: Chorismate synthase (369 aa).

Residues R48 and R54 each contribute to the NADP(+) site. FMN-binding positions include 125–127 (RSS), 238–239 (NA), G278, 293–297 (KPTSS), and R319.

Belongs to the chorismate synthase family. In terms of assembly, homotetramer. The cofactor is FMNH2.

It catalyses the reaction 5-O-(1-carboxyvinyl)-3-phosphoshikimate = chorismate + phosphate. It participates in metabolic intermediate biosynthesis; chorismate biosynthesis; chorismate from D-erythrose 4-phosphate and phosphoenolpyruvate: step 7/7. Catalyzes the anti-1,4-elimination of the C-3 phosphate and the C-6 proR hydrogen from 5-enolpyruvylshikimate-3-phosphate (EPSP) to yield chorismate, which is the branch point compound that serves as the starting substrate for the three terminal pathways of aromatic amino acid biosynthesis. This reaction introduces a second double bond into the aromatic ring system. The chain is Chorismate synthase from Burkholderia mallei (strain ATCC 23344).